Consider the following 412-residue polypeptide: uncharacterized protein (412 aa).

Positions Glu6 to Lys64 constitute a TRAM domain. Residues Gln242, Tyr278, Glu300, and Asp341 each coordinate S-adenosyl-L-methionine. Cys368 acts as the Nucleophile in catalysis.

It belongs to the class I-like SAM-binding methyltransferase superfamily. RNA M5U methyltransferase family.

This is an uncharacterized protein from Corynebacterium glutamicum (strain ATCC 13032 / DSM 20300 / JCM 1318 / BCRC 11384 / CCUG 27702 / LMG 3730 / NBRC 12168 / NCIMB 10025 / NRRL B-2784 / 534).